A 292-amino-acid polypeptide reads, in one-letter code: Porphobilinogen deaminase (292 aa).

Cys-236 is modified (S-(dipyrrolylmethanemethyl)cysteine).

This sequence belongs to the HMBS family. In terms of assembly, monomer. Dipyrromethane serves as cofactor.

The enzyme catalyses 4 porphobilinogen + H2O = hydroxymethylbilane + 4 NH4(+). It functions in the pathway porphyrin-containing compound metabolism; protoporphyrin-IX biosynthesis; coproporphyrinogen-III from 5-aminolevulinate: step 2/4. In terms of biological role, tetrapolymerization of the monopyrrole PBG into the hydroxymethylbilane pre-uroporphyrinogen in several discrete steps. The sequence is that of Porphobilinogen deaminase from Wolbachia sp. subsp. Drosophila simulans (strain wRi).